A 629-amino-acid chain; its full sequence is Chaperone protein HtpG (629 aa).

The a; substrate-binding stretch occupies residues 1–343 (MQKQTLSFQA…SSDLPLNVSR (343 aa)). Residues 344–558 (ELLQESRAVK…DGDMSTQLAR (215 aa)) form a b region. The c stretch occupies residues 559–629 (MLKQAGQTVP…YVRRVNALLV (71 aa)).

It belongs to the heat shock protein 90 family. In terms of assembly, homodimer.

The protein localises to the cytoplasm. Functionally, molecular chaperone. Has ATPase activity. In Polaromonas naphthalenivorans (strain CJ2), this protein is Chaperone protein HtpG.